Reading from the N-terminus, the 319-residue chain is Acetyl-coenzyme A carboxylase carboxyl transferase subunit alpha (319 aa).

In terms of domain architecture, CoA carboxyltransferase C-terminal spans 32–293; it reads NVDAEVRALR…KAVLLNELDA (262 aa).

It belongs to the AccA family. In terms of assembly, acetyl-CoA carboxylase is a heterohexamer composed of biotin carboxyl carrier protein (AccB), biotin carboxylase (AccC) and two subunits each of ACCase subunit alpha (AccA) and ACCase subunit beta (AccD).

It localises to the cytoplasm. The enzyme catalyses N(6)-carboxybiotinyl-L-lysyl-[protein] + acetyl-CoA = N(6)-biotinyl-L-lysyl-[protein] + malonyl-CoA. It participates in lipid metabolism; malonyl-CoA biosynthesis; malonyl-CoA from acetyl-CoA: step 1/1. Its function is as follows. Component of the acetyl coenzyme A carboxylase (ACC) complex. First, biotin carboxylase catalyzes the carboxylation of biotin on its carrier protein (BCCP) and then the CO(2) group is transferred by the carboxyltransferase to acetyl-CoA to form malonyl-CoA. The polypeptide is Acetyl-coenzyme A carboxylase carboxyl transferase subunit alpha (Xanthomonas campestris pv. campestris (strain B100)).